Here is a 432-residue protein sequence, read N- to C-terminus: Trigger factor (432 aa).

The PPIase FKBP-type domain maps to 161 to 246 (DDRVTIDFVG…LKKVENMVLP (86 aa)).

This sequence belongs to the FKBP-type PPIase family. Tig subfamily.

The protein localises to the cytoplasm. It catalyses the reaction [protein]-peptidylproline (omega=180) = [protein]-peptidylproline (omega=0). Functionally, involved in protein export. Acts as a chaperone by maintaining the newly synthesized protein in an open conformation. Functions as a peptidyl-prolyl cis-trans isomerase. This chain is Trigger factor, found in Haemophilus influenzae (strain PittGG).